The following is a 102-amino-acid chain: MSSQKIRIRLKAFDHKTLDQSAEKIVETAKRTGARVSGPIPLPTEKSIYTILRSPHVNKDSREQFEMRTHKRLIDILEPTSKTVDALMRLDLPAGVDIEIKL.

The protein belongs to the universal ribosomal protein uS10 family. Part of the 30S ribosomal subunit.

Involved in the binding of tRNA to the ribosomes. The chain is Small ribosomal subunit protein uS10 from Desulfitobacterium hafniense (strain DSM 10664 / DCB-2).